The sequence spans 307 residues: Salivary glue protein Sgs-3 (307 aa).

A signal peptide spans 1 to 23 (MKLTIATALASILLIGSANVANC). The tract at residues 56–257 (APPTQQSTTQ…PTTTKPTTPK (202 aa)) is disordered.

In terms of processing, O-glycosylated by Pgnat9 in salivary glands. As to expression, specifically expressed in the salivary gland.

The protein localises to the secreted. The polypeptide is Salivary glue protein Sgs-3 (Drosophila melanogaster (Fruit fly)).